Here is a 113-residue protein sequence, read N- to C-terminus: Large ribosomal subunit protein bL19 (113 aa).

The protein belongs to the bacterial ribosomal protein bL19 family.

This protein is located at the 30S-50S ribosomal subunit interface and may play a role in the structure and function of the aminoacyl-tRNA binding site. The protein is Large ribosomal subunit protein bL19 of Mycobacteroides abscessus (strain ATCC 19977 / DSM 44196 / CCUG 20993 / CIP 104536 / JCM 13569 / NCTC 13031 / TMC 1543 / L948) (Mycobacterium abscessus).